The sequence spans 231 residues: 4-aminobenzoate synthase (231 aa).

Residues E81, H88, E142, H174, D178, and H181 each contribute to the Fe(2+) site.

It belongs to the CADD family. As to quaternary structure, homodimer. During infection, interacts with death domains of mammalian tumor necrosis factor (TNF) family receptors Fas, DR4, DR5 and to some extent TNFR1, but not with the respective downstream adapters. Requires Fe(2+) as cofactor. It depends on Mn(2+) as a cofactor.

The protein localises to the secreted. Its subcellular location is the host cytoplasm. With respect to regulation, the protein is a cosubstrate rather than a true enzyme and is left in an inactive state after a single turnover. Inactive under anaerobic conditions. Its function is as follows. Involved in de novo para-aminobenzoate (PABA) biosynthesis. Acts as a self-sacrificing or 'suicide' enzyme that utilizes its own active site tyrosine residue(s) as the substrate for PABA synthesis. The side chain of the tyrosine residue is released from the protein backbone via cleavage of the C(alpha)-C(beta) bond, leaving a glycine in place of the original tyrosine residue. Reaction requires O(2) and a reduced dimetal cofactor. Functionally, was also identified as a specific toxin that associates with death domains of tumor necrosis factor family (TNF) receptors and induces apoptosis in mammalian cell lines through a Caspase-dependent mechanism. The chain is 4-aminobenzoate synthase from Chlamydia trachomatis serovar D (strain ATCC VR-885 / DSM 19411 / UW-3/Cx).